The chain runs to 187 residues: V-type ATP synthase subunit E (187 aa).

Belongs to the V-ATPase E subunit family.

Its function is as follows. Produces ATP from ADP in the presence of a proton gradient across the membrane. The polypeptide is V-type ATP synthase subunit E (Geotalea uraniireducens (strain Rf4) (Geobacter uraniireducens)).